Reading from the N-terminus, the 269-residue chain is Shikimate dehydrogenase (NADP(+)) (269 aa).

Shikimate contacts are provided by residues 17-19 (SKS) and Thr64. The active-site Proton acceptor is the Lys68. Residue Asp80 participates in NADP(+) binding. Asn89 and Asp105 together coordinate shikimate. NADP(+) contacts are provided by residues 130-134 (GAGGA), 154-159 (NRTHAK), and Met213. Tyr215 contributes to the shikimate binding site. Residue Gly237 participates in NADP(+) binding.

Belongs to the shikimate dehydrogenase family. Homodimer.

The enzyme catalyses shikimate + NADP(+) = 3-dehydroshikimate + NADPH + H(+). The protein operates within metabolic intermediate biosynthesis; chorismate biosynthesis; chorismate from D-erythrose 4-phosphate and phosphoenolpyruvate: step 4/7. In terms of biological role, involved in the biosynthesis of the chorismate, which leads to the biosynthesis of aromatic amino acids. Catalyzes the reversible NADPH linked reduction of 3-dehydroshikimate (DHSA) to yield shikimate (SA). In Neisseria polysaccharea, this protein is Shikimate dehydrogenase (NADP(+)).